The chain runs to 458 residues: Histidine--tRNA ligase (458 aa).

This sequence belongs to the class-II aminoacyl-tRNA synthetase family. As to quaternary structure, homodimer.

The protein localises to the cytoplasm. It catalyses the reaction tRNA(His) + L-histidine + ATP = L-histidyl-tRNA(His) + AMP + diphosphate + H(+). The chain is Histidine--tRNA ligase from Azobacteroides pseudotrichonymphae genomovar. CFP2.